The following is a 215-amino-acid chain: C-type lectin domain family 4 member D (215 aa).

The Cytoplasmic portion of the chain corresponds to 1-17 (MGLEKPQSKLEGGMHPQ). The chain crosses the membrane as a helical; Signal-anchor for type II membrane protein span at residues 18 to 38 (LIPSVIAVVFILLLSVCFIAS). Over 39-215 (CLVTHHNFSR…ICKIPGTTLN (177 aa)) the chain is Extracellular. Asn45 carries N-linked (GlcNAc...) asparagine glycosylation. The cysteines at positions 84 and 95 are disulfide-linked. A C-type lectin domain is found at 91 to 208 (FQSNCYFPLT…CNFEASRICK (118 aa)). Residues Asn102 and Asn111 are each glycosylated (N-linked (GlcNAc...) asparagine). 2 cysteine pairs are disulfide-bonded: Cys112–Cys207 and Cys182–Cys199. Residues Glu173, Asp175, Asn195, and Asp196 each contribute to the Ca(2+) site.

Heterodimer with CLEC4E; disulfide-linked. CLEC4E acts as a bridge for interaction between CLEC4D and FCER1G to form a functional complex. Heterodimer with CLEC6A; this heterodimer forms a pattern recognition receptor (PRR) against fungal infection. As to expression, expressed weakly in peripheral blood leukocytes, bone marrow and spleen. Expression is confined mostly in monocytes and macrophage and seems to be up-regulated by IL-6, IL-10, TNF-alpha and IFN-gamma.

The protein resides in the cell membrane. Functionally, calcium-dependent lectin that acts as a pattern recognition receptor (PRR) of the innate immune system: recognizes damage-associated molecular patterns (DAMPs) of pathogen-associated molecular patterns (PAMPs) of bacteria and fungi. The PAMPs include alpha-mannans on C.albicans hypheas and mycobacterial trehalose 6,6'-dimycolate (TDM). Interacts with signaling adapter Fc receptor gamma chain/FCER1G, likely via CLEC4E, to form a functional complex in myeloid cells. Binding of mycobacterial TDM or C.albicans alpha-mannans to this receptor complex leads to phosphorylation of the immunoreceptor tyrosine-based activation motif (ITAM) of FCER1G, triggering activation of SYK, CARD9 and NF-kappa-B, consequently driving maturation of antigen-presenting cells and shaping antigen-specific priming of T-cells toward effector T-helper 1 and T-helper 17 cell subtypes. The heterodimer formed with CLEC6A is active against fungal infection. Functions as an endocytic receptor. May be involved in antigen uptake at the site of infection, either for clearance of the antigen, or for processing and further presentation to T-cells. The polypeptide is C-type lectin domain family 4 member D (Homo sapiens (Human)).